Consider the following 261-residue polypeptide: 4-hydroxy-tetrahydrodipicolinate reductase (261 aa).

Residues 11 to 16, 96 to 98, and 122 to 125 each bind NAD(+); these read GFMGAM, GTT, and APNF. The active-site Proton donor/acceptor is H152. H153 lines the (S)-2,3,4,5-tetrahydrodipicolinate pocket. K156 serves as the catalytic Proton donor. 162–163 contributes to the (S)-2,3,4,5-tetrahydrodipicolinate binding site; that stretch reads GT.

It belongs to the DapB family.

It localises to the cytoplasm. The enzyme catalyses (S)-2,3,4,5-tetrahydrodipicolinate + NAD(+) + H2O = (2S,4S)-4-hydroxy-2,3,4,5-tetrahydrodipicolinate + NADH + H(+). It catalyses the reaction (S)-2,3,4,5-tetrahydrodipicolinate + NADP(+) + H2O = (2S,4S)-4-hydroxy-2,3,4,5-tetrahydrodipicolinate + NADPH + H(+). The protein operates within amino-acid biosynthesis; L-lysine biosynthesis via DAP pathway; (S)-tetrahydrodipicolinate from L-aspartate: step 4/4. Functionally, catalyzes the conversion of 4-hydroxy-tetrahydrodipicolinate (HTPA) to tetrahydrodipicolinate. This is 4-hydroxy-tetrahydrodipicolinate reductase from Lactobacillus helveticus (strain DPC 4571).